A 402-amino-acid chain; its full sequence is Baeyer-Villiger oxidase notM (402 aa).

Belongs to the questin oxidase family.

Baeyer-Villiger oxidase; part of the gene cluster that mediates the biosynthesis of notoamide, a fungal indole alkaloid that belongs to a family of natural products containing a characteristic bicyclo[2.2.2]diazaoctane core. The first step of notoamide biosynthesis involves coupling of L-proline and L-tryptophan by the bimodular NRPS notE, to produce cyclo-L-tryptophan-L-proline called brevianamide F. The reverse prenyltransferase notF then acts as a deoxybrevianamide E synthase and converts brevianamide F to deoxybrevianamide E via reverse prenylation at C-2 of the indole ring leading to the bicyclo[2.2.2]diazaoctane core. Deoxybrevianamide E is further hydroxylated at C-6 of the indole ring, likely catalyzed by the cytochrome P450 monooxygenase notG, to yield 6-hydroxy-deoxybrevianamide E. 6-hydroxy-deoxybrevianamide E is a specific substrate of the prenyltransferase notC for normal prenylation at C-7 to produce 6-hydroxy-7-prenyl-deoxybrevianamide, also called notoamide S. As the proposed pivotal branching point in notoamide biosynthesis, notoamide S can be diverted to notoamide E through an oxidative pyran ring closure putatively catalyzed by either notH cytochrome P450 monooxygenase or the notD FAD-linked oxidoreductase. This step would be followed by an indole 2,3-epoxidation-initiated pinacol-like rearrangement catalyzed by the notB FAD-dependent monooxygenase leading to the formation of notoamide C and notoamide D. On the other hand notoamide S is converted to notoamide T by notH (or notD), a bifunctional oxidase that also functions as the intramolecular Diels-Alderase responsible for generation of (+)-notoamide T. To generate antipodal (-)-notoaminide T, notH' (or notD') in Aspergillus versicolor is expected to catalyze a Diels-Alder reaction leading to the opposite stereochemistry. The remaining oxidoreductase notD (or notH) likely catalyzes the oxidative pyran ring formation to yield (+)-stephacidin A. The FAD-dependent monooxygenase notI is highly similar to notB and is predicted to catalyze a similar conversion from (+)-stephacidin A to (-)-notoamide B via the 2,3-epoxidation of (+)-stephacidin A followed by a pinacol-type rearrangement. Finally, it remains unclear which enzyme could be responsible for the final hydroxylation steps leading to notoamide A and sclerotiamide. The function of notM in the notoamide biosynthesis has not been determined yet. The polypeptide is Baeyer-Villiger oxidase notM (Aspergillus sp. (strain MF297-2)).